We begin with the raw amino-acid sequence, 202 residues long: Small ribosomal subunit protein uS4 (202 aa).

A disordered region spans residues 22–43 (TRKSARRAYPPGQHGQNRRKRS). Residues 90 to 152 (MRLDNTVFRL…EKSKEMVKTN (63 aa)) form the S4 RNA-binding domain.

The protein belongs to the universal ribosomal protein uS4 family. As to quaternary structure, part of the 30S ribosomal subunit. Contacts protein S5. The interaction surface between S4 and S5 is involved in control of translational fidelity.

In terms of biological role, one of the primary rRNA binding proteins, it binds directly to 16S rRNA where it nucleates assembly of the body of the 30S subunit. With S5 and S12 plays an important role in translational accuracy. This chain is Small ribosomal subunit protein uS4, found in Trichodesmium erythraeum (strain IMS101).